A 315-amino-acid chain; its full sequence is O-antigen chain rhamnosyltransferase WbaN (315 aa).

This sequence belongs to the glycosyltransferase 2 family.

It catalyses the reaction alpha-D-galactosyl-di-trans,octa-cis-undecaprenyl diphosphate + dTDP-beta-L-rhamnose = alpha-L-rhamnosyl-(1-&gt;3)-alpha-D-galactosyl-1-diphospho-di-trans,octa-cis-undecaprenol + dTDP + H(+). It participates in bacterial outer membrane biogenesis; LPS O-antigen biosynthesis. In terms of biological role, rhamnosyltransferase involved in the biosynthesis of the repeat unit of the lipopolysaccharide (LPS) O-antigen region. Catalyzes the addition of a rhamnose to the galactosyl-undecaprenyl diphosphate intermediate. The protein is O-antigen chain rhamnosyltransferase WbaN of Salmonella anatum.